Here is a 348-residue protein sequence, read N- to C-terminus: MKNLFNLFLMFFFAMPILSLSENPTNFSESCEDGSGETGSSFGIGFDLVLDFGLYRNSCPEAESIVYSWVETTVLEDPRMAASLLRLHFHDCFVNGCDASVLLDDTEGLVGEKTAPPNLNSLRGFEVIDSIKSDIESVCPETVSCADILAMAARDSVVVSGGPRWEVEVGRKDSRTASKQAATNGLPSPNSTVSTLISTFQNLGLSQTDMVALSGGHTLGKARCTSFTARLQPLQTGQPANHGDNLEFLESLQQLCSTVGPSVGITQLDLVTPSTFDNQYYVNLLSGEGLLPSDQALAVQDPGTRAIVETYATDQSVFFEDFKNAMVKMGGIPGGSNSEIRKNCRMIN.

The first 21 residues, 1–21, serve as a signal peptide directing secretion; the sequence is MKNLFNLFLMFFFAMPILSLS. Asn26 carries N-linked (GlcNAc...) asparagine glycosylation. Intrachain disulfides connect Cys59–Cys139, Cys92–Cys97, Cys145–Cys344, and Cys224–Cys256. The active-site Proton acceptor is the His90. Positions 91, 94, 96, 98, and 100 each coordinate Ca(2+). The disordered stretch occupies residues 170–189; sequence GRKDSRTASKQAATNGLPSP. The segment covering 177 to 189 has biased composition (polar residues); sequence ASKQAATNGLPSP. A substrate-binding site is contributed by Pro187. N-linked (GlcNAc...) asparagine glycosylation occurs at Asn190. His217 provides a ligand contact to heme b. Thr218 is a Ca(2+) binding site. Asp269, Thr272, and Asp277 together coordinate Ca(2+).

This sequence belongs to the peroxidase family. Classical plant (class III) peroxidase subfamily. Heme b is required as a cofactor. Requires Ca(2+) as cofactor.

It localises to the secreted. It carries out the reaction 2 a phenolic donor + H2O2 = 2 a phenolic radical donor + 2 H2O. Removal of H(2)O(2), oxidation of toxic reductants, biosynthesis and degradation of lignin, suberization, auxin catabolism, response to environmental stresses such as wounding, pathogen attack and oxidative stress. These functions might be dependent on each isozyme/isoform in each plant tissue. This Arabidopsis thaliana (Mouse-ear cress) protein is Peroxidase 40 (PER40).